We begin with the raw amino-acid sequence, 309 residues long: Sulfate adenylyltransferase subunit 2 (309 aa).

The protein belongs to the PAPS reductase family. CysD subfamily. In terms of assembly, heterodimer composed of CysD, the smaller subunit, and CysN.

The catalysed reaction is sulfate + ATP + H(+) = adenosine 5'-phosphosulfate + diphosphate. It functions in the pathway sulfur metabolism; hydrogen sulfide biosynthesis; sulfite from sulfate: step 1/3. In terms of biological role, with CysN forms the ATP sulfurylase (ATPS) that catalyzes the adenylation of sulfate producing adenosine 5'-phosphosulfate (APS) and diphosphate, the first enzymatic step in sulfur assimilation pathway. APS synthesis involves the formation of a high-energy phosphoric-sulfuric acid anhydride bond driven by GTP hydrolysis by CysN coupled to ATP hydrolysis by CysD. The sequence is that of Sulfate adenylyltransferase subunit 2 from Mycobacterium sp. (strain JLS).